We begin with the raw amino-acid sequence, 302 residues long: N-acetyl-D-glucosamine kinase (302 aa).

ATP contacts are provided by residues 4–11 and 133–140; these read GFDVGGTK and GFGGGLVY. Histidine 157, cysteine 177, cysteine 179, and cysteine 184 together coordinate Zn(2+).

Belongs to the ROK (NagC/XylR) family. NagK subfamily.

It catalyses the reaction N-acetyl-D-glucosamine + ATP = N-acetyl-D-glucosamine 6-phosphate + ADP + H(+). It functions in the pathway cell wall biogenesis; peptidoglycan recycling. Catalyzes the phosphorylation of N-acetyl-D-glucosamine (GlcNAc) derived from cell-wall degradation, yielding GlcNAc-6-P. This is N-acetyl-D-glucosamine kinase from Vibrio atlanticus (strain LGP32) (Vibrio splendidus (strain Mel32)).